The primary structure comprises 445 residues: Neuropeptide Y receptor type 5 (445 aa).

Residues 1–42 lie on the Extracellular side of the membrane; sequence MEFKLEEHFNKTFVTENNTAAARNAAFPAWEDYRGSVDDLQY. Asn10 and Asn17 each carry an N-linked (GlcNAc...) asparagine glycan. The chain crosses the membrane as a helical span at residues 43–63; it reads FLIGLYTFVSLLGFMGNLLIL. Topologically, residues 64–77 are cytoplasmic; that stretch reads MAVMKKRNQKTTVN. A helical membrane pass occupies residues 78–98; sequence FLIGNLAFSDILVVLFCSPFT. Over 99–117 the chain is Extracellular; the sequence is LTSVLLDQWMFGKAMCHIM. Residues Cys114 and Cys198 are joined by a disulfide bond. The chain crosses the membrane as a helical span at residues 118-138; sequence PFLQCVSVLVSTLILISIAIV. The Cytoplasmic portion of the chain corresponds to 139–156; that stretch reads RYHMIKHPISNNLTANHG. A helical transmembrane segment spans residues 157–177; sequence YFLIATVWTLGFAICSPLPVF. Residues 178–208 are Extracellular-facing; sequence HSLVELKETFGSALLSSKYLCVESWPSDSYR. A helical transmembrane segment spans residues 209–229; sequence IAFTISLLLVQYILPLVCLTV. Residues 230–368 lie on the Cytoplasmic side of the membrane; sequence SHTSVCRSIS…KKRSRSVFYR (139 aa). A helical transmembrane segment spans residues 369–389; that stretch reads LTILILVFAVSWMPLHVFHVV. Over 390–406 the chain is Extracellular; the sequence is TDFNDNLISNRHFKLVY. The chain crosses the membrane as a helical span at residues 407 to 427; sequence CICHLLGMMSCCLNPILYGFL. The Cytoplasmic portion of the chain corresponds to 428 to 445; it reads NNGIKADLRALIHCLHMS. Cys441 carries S-palmitoyl cysteine lipidation.

This sequence belongs to the G-protein coupled receptor 1 family. In terms of tissue distribution, brain; hypothalamus.

The protein localises to the cell membrane. Receptor for neuropeptide Y and peptide YY. The activity of this receptor is mediated by G proteins that inhibit adenylate cyclase activity. Seems to be associated with food intake. Could be involved in feeding disorders. This chain is Neuropeptide Y receptor type 5 (Npy5r), found in Rattus norvegicus (Rat).